Consider the following 512-residue polypeptide: Serine/threonine-protein kinase BSK1 (512 aa).

Residue G2 is the site of N-myristoyl glycine attachment. The tract at residues 8–48 (FSGDNPLGKDGVQPQPLSQNNHGGATTADNGGSGGASGVGG) is disordered. Positions 38–48 (GGSGGASGVGG) are enriched in gly residues. A Protein kinase domain is found at 76-331 (DNIVSESGEK…DLVATLAPLQ (256 aa)). Residues 82-90 (SGEKAPNLV) and K104 contribute to the ATP site. D198 serves as the catalytic Proton acceptor. At S230 the chain carries Phosphoserine. A coiled-coil region spans residues 483–508 (AKLNMNTDAADMLNEAAQLEEKRQRG).

The protein belongs to the protein kinase superfamily. Ser/Thr protein kinase family. In terms of assembly, interacts with BRI1. Interacts with ASK7/BIN2, BSK5, BSK6, BSK8 and BSK11. Interacts with FLS2. Phosphorylated at Ser-230 by BRI1 upon brassinolide (BL) treatment. Phosphorylation at Ser-230 weakens the interaction between BSK1 and BRI1. Phosphorylated by ASK7/BIN2 and ASK9/BIL2.

The protein resides in the cell membrane. The catalysed reaction is L-seryl-[protein] + ATP = O-phospho-L-seryl-[protein] + ADP + H(+). It carries out the reaction L-threonyl-[protein] + ATP = O-phospho-L-threonyl-[protein] + ADP + H(+). Functionally, serine/threonine kinase that acts as a positive regulator of brassinosteroid (BR) signaling downstream of the receptor kinase BRI1. Mediates signal transduction from BRI1 by functioning as substrate of BRI1. Functions as a positive regulator of plant immunity. May be involved in the regulation of pattern-triggered immunity (PTI) downstream of the flagellin receptor FLS2. Possesses kinase activity in vitro. Kinase activity is required for its function in innate immunity. This Arabidopsis thaliana (Mouse-ear cress) protein is Serine/threonine-protein kinase BSK1.